The chain runs to 182 residues: Phospholipase A2 inhibitor gamma subunit A (182 aa).

8 cysteine pairs are disulfide-bonded: C3–C27, C6–C13, C20–C48, C54–C75, C76–C81, C99–C124, C117–C146, and C150–C172. Residue N157 is glycosylated (N-linked (GlcNAc...) asparagine).

Belongs to the CNF-like-inhibitor family. As to quaternary structure, heterotrimer of 2 subunits A and 1 subunit B. Post-translationally, N-glycosylation is not important for activity, since deglycosylation does not change its PLA2 inhibitory activity. As to expression, expressed by the liver.

The protein localises to the secreted. Its function is as follows. Strongly inhibits its own venom PLA2 and all other PLA2s tested including Elapid, Crotalid and Viperid venom PLA2s, as well as honeybee PLA2s. In Laticauda semifasciata (Black-banded sea krait), this protein is Phospholipase A2 inhibitor gamma subunit A.